The following is a 211-amino-acid chain: Mitotic spindle assembly checkpoint protein MAD2B (211 aa).

An HORMA domain is found at 13–203 (QVVADVLCEF…SDILKMQLYV (191 aa)). Positions 21 to 155 (EFLEVAVHLI…FTVLVHTREA (135 aa)) are mediates interaction with REV1 and REV3L and homodimerization. The interval 150 to 211 (VHTREAATRN…YVEERAHKGS (62 aa)) is mediates interaction with ipaB.

In terms of assembly, homooligomer. Heterodimer with REV3L. This dimer forms the minimal DNA polymerase zeta complex (Pol-zeta2), with REV3L bearing DNA polymerase catalytic activity, although its activity is very low in this context. Component of the tetrameric Pol-zeta complex (Pol-zeta4), which consists of REV3L, MAD2L2, POLD2 and POLD3; Pol-zeta4 is the fully active form of DNA polymerase zeta. Component of the shieldin complex, consisting of SHLD1, SHLD2, SHLD3 and MAD2L2/REV7. Within the complex, SHLD2 forms a scaffold which interacts with a SHLD3-MAD2L2 subcomplex via its N-terminus, and with SHLD1 via its C-terminus. Interacts with REV1. Interacts with ADAM9. Interacts with CHAMP1. Interacts with FZR1 (in complex with the anaphase promoting complex APC). Interacts with CDC20; PubMed:11459825 could not detect the interaction. Interacts with RAN. Interacts with ELK1; the interaction is direct and recruits MAD2L2 to ELK1-specific promoters. May interact with the JNK kinases MAPK8 and/or MAPK9 to stimulate ELK1 phosphorylation and transcriptional activity upon DNA damage. Interacts with TCF7L2; prevents its binding to promoters and negatively modulates its transcriptional activity. Interacts with YY1AP1. Interacts with S.flexneri protein ipaB; prevents the interaction of MAD2L2 with FZR1 and CDC20 resulting in an activation of the anaphase-promoting complex APC and a cell cycle arrest. Interacts with PRCC; the interaction is direct. Interacts with POGZ. Interacts with ASTE1. As to expression, ubiquitously expressed.

It is found in the nucleus. It localises to the cytoplasm. Its subcellular location is the cytoskeleton. The protein resides in the spindle. The protein localises to the chromosome. In terms of biological role, adapter protein able to interact with different proteins and involved in different biological processes. Mediates the interaction between the error-prone DNA polymerase zeta catalytic subunit REV3L and the inserter polymerase REV1, thereby mediating the second polymerase switching in translesion DNA synthesis. Translesion DNA synthesis releases the replication blockade of replicative polymerases, stalled in presence of DNA lesions. Component of the shieldin complex, which plays an important role in repair of DNA double-stranded breaks (DSBs). During G1 and S phase of the cell cycle, the complex functions downstream of TP53BP1 to promote non-homologous end joining (NHEJ) and suppress DNA end resection. Mediates various NHEJ-dependent processes including immunoglobulin class-switch recombination, and fusion of unprotected telomeres. May also regulate another aspect of cellular response to DNA damage through regulation of the JNK-mediated phosphorylation and activation of the transcriptional activator ELK1. Inhibits the FZR1- and probably CDC20-mediated activation of the anaphase promoting complex APC thereby regulating progression through the cell cycle. Regulates TCF7L2-mediated gene transcription and may play a role in epithelial-mesenchymal transdifferentiation. This is Mitotic spindle assembly checkpoint protein MAD2B (MAD2L2) from Homo sapiens (Human).